The sequence spans 271 residues: Eukaryotic translation initiation factor 3 subunit G (271 aa).

2 disordered regions span residues 1 to 29 (MPALDDIKSSWADEVESDSGSLPPPSEVI) and 143 to 185 (KPTK…MRGR). An RRM domain is found at 189–267 (SAIRISNLSE…LILSVEWSKP (79 aa)).

This sequence belongs to the eIF-3 subunit G family. As to quaternary structure, component of the eukaryotic translation initiation factor 3 (eIF-3) complex.

It localises to the cytoplasm. Its function is as follows. RNA-binding component of the eukaryotic translation initiation factor 3 (eIF-3) complex, which is involved in protein synthesis of a specialized repertoire of mRNAs and, together with other initiation factors, stimulates binding of mRNA and methionyl-tRNAi to the 40S ribosome. The eIF-3 complex specifically targets and initiates translation of a subset of mRNAs involved in cell proliferation. This subunit can bind 18S rRNA. The protein is Eukaryotic translation initiation factor 3 subunit G of Anopheles gambiae (African malaria mosquito).